We begin with the raw amino-acid sequence, 271 residues long: Ribosomal RNA small subunit methyltransferase A (271 aa).

S-adenosyl-L-methionine-binding residues include asparagine 19, leucine 21, glycine 46, glutamate 67, aspartate 92, and asparagine 114.

The protein belongs to the class I-like SAM-binding methyltransferase superfamily. rRNA adenine N(6)-methyltransferase family. RsmA subfamily.

It localises to the cytoplasm. It carries out the reaction adenosine(1518)/adenosine(1519) in 16S rRNA + 4 S-adenosyl-L-methionine = N(6)-dimethyladenosine(1518)/N(6)-dimethyladenosine(1519) in 16S rRNA + 4 S-adenosyl-L-homocysteine + 4 H(+). Specifically dimethylates two adjacent adenosines (A1518 and A1519) in the loop of a conserved hairpin near the 3'-end of 16S rRNA in the 30S particle. May play a critical role in biogenesis of 30S subunits. This is Ribosomal RNA small subunit methyltransferase A from Aeromonas hydrophila subsp. hydrophila (strain ATCC 7966 / DSM 30187 / BCRC 13018 / CCUG 14551 / JCM 1027 / KCTC 2358 / NCIMB 9240 / NCTC 8049).